The sequence spans 273 residues: 2,3,4,5-tetrahydropyridine-2,6-dicarboxylate N-succinyltransferase (273 aa).

Substrate is bound by residues arginine 104 and aspartate 141.

Belongs to the transferase hexapeptide repeat family. Homotrimer.

The protein resides in the cytoplasm. The enzyme catalyses (S)-2,3,4,5-tetrahydrodipicolinate + succinyl-CoA + H2O = (S)-2-succinylamino-6-oxoheptanedioate + CoA. It participates in amino-acid biosynthesis; L-lysine biosynthesis via DAP pathway; LL-2,6-diaminopimelate from (S)-tetrahydrodipicolinate (succinylase route): step 1/3. The polypeptide is 2,3,4,5-tetrahydropyridine-2,6-dicarboxylate N-succinyltransferase (Nitrosomonas europaea (strain ATCC 19718 / CIP 103999 / KCTC 2705 / NBRC 14298)).